A 385-amino-acid chain; its full sequence is ATP phosphoribosyltransferase regulatory subunit (385 aa).

It belongs to the class-II aminoacyl-tRNA synthetase family. HisZ subfamily. In terms of assembly, heteromultimer composed of HisG and HisZ subunits.

Its subcellular location is the cytoplasm. Its pathway is amino-acid biosynthesis; L-histidine biosynthesis; L-histidine from 5-phospho-alpha-D-ribose 1-diphosphate: step 1/9. In terms of biological role, required for the first step of histidine biosynthesis. May allow the feedback regulation of ATP phosphoribosyltransferase activity by histidine. This chain is ATP phosphoribosyltransferase regulatory subunit, found in Bordetella pertussis (strain Tohama I / ATCC BAA-589 / NCTC 13251).